Reading from the N-terminus, the 153-residue chain is 6,7-dimethyl-8-ribityllumazine synthase (153 aa).

Residues tryptophan 22, 56–58 (SYE), and 80–82 (AVI) contribute to the 5-amino-6-(D-ribitylamino)uracil site. Residue 85 to 86 (AT) participates in (2S)-2-hydroxy-3-oxobutyl phosphate binding. Catalysis depends on histidine 88, which acts as the Proton donor. Position 113 (leucine 113) interacts with 5-amino-6-(D-ribitylamino)uracil. Arginine 127 provides a ligand contact to (2S)-2-hydroxy-3-oxobutyl phosphate.

This sequence belongs to the DMRL synthase family.

It catalyses the reaction (2S)-2-hydroxy-3-oxobutyl phosphate + 5-amino-6-(D-ribitylamino)uracil = 6,7-dimethyl-8-(1-D-ribityl)lumazine + phosphate + 2 H2O + H(+). It participates in cofactor biosynthesis; riboflavin biosynthesis; riboflavin from 2-hydroxy-3-oxobutyl phosphate and 5-amino-6-(D-ribitylamino)uracil: step 1/2. Catalyzes the formation of 6,7-dimethyl-8-ribityllumazine by condensation of 5-amino-6-(D-ribitylamino)uracil with 3,4-dihydroxy-2-butanone 4-phosphate. This is the penultimate step in the biosynthesis of riboflavin. This is 6,7-dimethyl-8-ribityllumazine synthase from Herpetosiphon aurantiacus (strain ATCC 23779 / DSM 785 / 114-95).